Reading from the N-terminus, the 544-residue chain is Putative cysteine ligase BshC (544 aa).

Residues 431–463 (LNDTCRTIKEEHEKFIQELSRLDEKIYDFEEKN) are a coiled coil.

The protein belongs to the BshC family.

Its function is as follows. Involved in bacillithiol (BSH) biosynthesis. May catalyze the last step of the pathway, the addition of cysteine to glucosamine malate (GlcN-Mal) to generate BSH. This is Putative cysteine ligase BshC from Natranaerobius thermophilus (strain ATCC BAA-1301 / DSM 18059 / JW/NM-WN-LF).